A 317-amino-acid polypeptide reads, in one-letter code: Melanocyte-stimulating hormone receptor (317 aa).

Residues 1–20 (MPVQGSQRSLLGAVNSTPTA) show a composition bias toward polar residues. Residues 1 to 23 (MPVQGSQRSLLGAVNSTPTATPH) form a disordered region. The Extracellular segment spans residues 1–37 (MPVQGSQRSLLGAVNSTPTATPHLRPAANQTGPQCLE). N-linked (GlcNAc...) asparagine glycosylation occurs at Asn-29. The helical transmembrane segment at 38–63 (VSIPDGLFLCLGLVSLVENTLVVAAI) threads the bilayer. The Cytoplasmic segment spans residues 64-72 (AKNRNLHSP). A helical transmembrane segment spans residues 73–93 (MYCFICCLALSDLLVSVSSVL). The Extracellular portion of the chain corresponds to 94-118 (ETAVLLLLGAGALAAQATVVQQLGN). The helical transmembrane segment at 119 to 140 (VIDVLLCSSMVSSLFFLGAIAM) threads the bilayer. Residues 141–163 (DRYISIFYALRYHSIVTLARARR) lie on the Cytoplasmic side of the membrane. Residues 164-183 (AIAAIWAASILSSTLFIAYC) form a helical membrane-spanning segment. Residues 184 to 191 (DRTAALLC) are Extracellular-facing. A helical transmembrane segment spans residues 192–211 (LVVFFLAMLVLMAVLYVHML). At 212 to 240 (TQARQHAQGIARLHKRQRPVQQGWGLKGA) the chain is on the cytoplasmic side. Residues 241-266 (ATLTILLGVFFLCWGPFFLHLTLIAV) form a helical membrane-spanning segment. The Extracellular portion of the chain corresponds to 267-279 (CPQHPTCSCIFKN). Residues 280–300 (FRLFLALIVCNAIVDPLIYAF) traverse the membrane as a helical segment. The Cytoplasmic segment spans residues 301–317 (RSQELRKTLKEVLLFFW).

The protein belongs to the G-protein coupled receptor 1 family. In terms of assembly, interacts with MGRN1, but does not undergo MGRN1-mediated ubiquitination; this interaction competes with GNAS-binding and thus inhibits agonist-induced cAMP production. Interacts with OPN3; the interaction results in a decrease in MC1R-mediated cAMP signaling and ultimately a decrease in melanin production in melanocytes.

Its subcellular location is the cell membrane. Receptor for MSH (alpha, beta and gamma) and ACTH. The activity of this receptor is mediated by G proteins which activate adenylate cyclase. Mediates melanogenesis, the production of eumelanin (black/brown) and phaeomelanin (red/yellow), via regulation of cAMP signaling in melanocytes. The protein is Melanocyte-stimulating hormone receptor (MC1R) of Lemur catta (Ring-tailed lemur).